Consider the following 132-residue polypeptide: Small ribosomal subunit protein uS8 (132 aa).

Belongs to the universal ribosomal protein uS8 family. As to quaternary structure, part of the 30S ribosomal subunit. Contacts proteins S5 and S12.

Functionally, one of the primary rRNA binding proteins, it binds directly to 16S rRNA central domain where it helps coordinate assembly of the platform of the 30S subunit. This Bacillus anthracis (strain A0248) protein is Small ribosomal subunit protein uS8.